The sequence spans 264 residues: MICOS complex subunit MIC27 (264 aa).

The N-terminal 27 residues, 1-27 (MAALRMGKLTTMPTGLIYASISVHVAK), are a transit peptide targeting the mitochondrion. The Mitochondrial intermembrane segment spans residues 28 to 110 (EEESKKQLVK…YVYLKNPPRD (83 aa)). A helical transmembrane segment spans residues 111 to 129 (FLPKIGVITVSGLAGFISA). Residues 130–137 (RKGSRFKR) lie on the Mitochondrial matrix side of the membrane. A helical membrane pass occupies residues 138 to 155 (IAYPLGLATLGATVCYPV). Residues 156-264 (QSVIIAKVAG…EDIDMYSTRS (109 aa)) are Mitochondrial intermembrane-facing. A compositionally biased stretch (basic and acidic residues) spans 189–198 (KLPEHKEKTK). Residues 189 to 264 (KLPEHKEKTK…EDIDMYSTRS (76 aa)) are disordered. Residues 223–238 (AELSSETKTKSTSGAT) are compositionally biased toward low complexity. The segment covering 245-256 (KLMDHGQSHPED) has biased composition (basic and acidic residues).

Belongs to the apolipoprotein O/MICOS complex subunit Mic27 family. Component of the mitochondrial contact site and cristae organizing system (MICOS) complex, composed of at least MICOS10/MIC10, CHCHD3/MIC19, CHCHD6/MIC25, APOOL/MIC27, IMMT/MIC60, APOO/MIC23/MIC26 and QIL1/MIC13. This complex was also known under the names MINOS or MitOS complex. The MICOS complex associates with mitochondrial outer membrane proteins SAMM50, MTX1 and MTX2 (together described as components of the mitochondrial outer membrane sorting assembly machinery (SAM) complex) and DNAJC11, mitochondrial inner membrane protein TMEM11 and with HSPA9. The MICOS and SAM complexes together with DNAJC11 are part of a large protein complex spanning both membranes termed the mitochondrial intermembrane space bridging (MIB) complex. Interacts with MICOS10/MIC10, IMMT/MIC60 and APOO/MIC23/MIC26.

The protein localises to the mitochondrion inner membrane. The protein resides in the mitochondrion. Component of the MICOS complex, a large protein complex of the mitochondrial inner membrane that plays crucial roles in the maintenance of crista junctions, inner membrane architecture, and formation of contact sites to the outer membrane. Specifically binds to cardiolipin (in vitro) but not to the precursor lipid phosphatidylglycerol. Plays a crucial role in crista junction formation and mitochondrial function. This chain is MICOS complex subunit MIC27 (APOL), found in Bos taurus (Bovine).